A 456-amino-acid polypeptide reads, in one-letter code: Methylenetetrahydrofolate--tRNA-(uracil-5-)-methyltransferase TrmFO (456 aa).

9–14 (GGGMAG) serves as a coordination point for FAD.

Belongs to the MnmG family. TrmFO subfamily. The cofactor is FAD.

The protein resides in the cytoplasm. It catalyses the reaction uridine(54) in tRNA + (6R)-5,10-methylene-5,6,7,8-tetrahydrofolate + NADH + H(+) = 5-methyluridine(54) in tRNA + (6S)-5,6,7,8-tetrahydrofolate + NAD(+). The enzyme catalyses uridine(54) in tRNA + (6R)-5,10-methylene-5,6,7,8-tetrahydrofolate + NADPH + H(+) = 5-methyluridine(54) in tRNA + (6S)-5,6,7,8-tetrahydrofolate + NADP(+). Its function is as follows. Catalyzes the folate-dependent formation of 5-methyl-uridine at position 54 (M-5-U54) in all tRNAs. The sequence is that of Methylenetetrahydrofolate--tRNA-(uracil-5-)-methyltransferase TrmFO from Novosphingobium aromaticivorans (strain ATCC 700278 / DSM 12444 / CCUG 56034 / CIP 105152 / NBRC 16084 / F199).